We begin with the raw amino-acid sequence, 367 residues long: Protein trichome birefringence-like 39 (367 aa).

The helical; Signal-anchor for type II membrane protein transmembrane segment at Gly-7–Asn-29 threads the bilayer. The GDS motif signature appears at Gly-120–Ser-122. Residues Asp-343–Asn-357 carry the DCXHWCLPGXXDXWN motif motif.

The protein belongs to the PC-esterase family. TBL subfamily.

Its subcellular location is the membrane. May act as a bridging protein that binds pectin and other cell wall polysaccharides. Probably involved in maintaining esterification of pectins. May be involved in the specific O-acetylation of cell wall polymers. In Arabidopsis thaliana (Mouse-ear cress), this protein is Protein trichome birefringence-like 39 (TBL39).